Consider the following 513-residue polypeptide: ATP synthase subunit alpha (513 aa).

Residue 169–176 (GDRQTGKT) coordinates ATP.

The protein belongs to the ATPase alpha/beta chains family. As to quaternary structure, F-type ATPases have 2 components, CF(1) - the catalytic core - and CF(0) - the membrane proton channel. CF(1) has five subunits: alpha(3), beta(3), gamma(1), delta(1), epsilon(1). CF(0) has three main subunits: a(1), b(2) and c(9-12). The alpha and beta chains form an alternating ring which encloses part of the gamma chain. CF(1) is attached to CF(0) by a central stalk formed by the gamma and epsilon chains, while a peripheral stalk is formed by the delta and b chains.

Its subcellular location is the cell inner membrane. The catalysed reaction is ATP + H2O + 4 H(+)(in) = ADP + phosphate + 5 H(+)(out). Its function is as follows. Produces ATP from ADP in the presence of a proton gradient across the membrane. The alpha chain is a regulatory subunit. The chain is ATP synthase subunit alpha from Shewanella putrefaciens (strain CN-32 / ATCC BAA-453).